A 673-amino-acid chain; its full sequence is DNA ligase (673 aa).

NAD(+) contacts are provided by residues 35–39, 84–85, and Glu115; these read DAQYD and SL. Lys117 functions as the N6-AMP-lysine intermediate in the catalytic mechanism. Arg138, Glu178, Lys294, and Lys318 together coordinate NAD(+). Residues Cys412, Cys415, Cys430, and Cys435 each contribute to the Zn(2+) site. The region spanning 594 to 673 is the BRCT domain; sequence LQSDRLAGKS…DELHALLVDE (80 aa).

Belongs to the NAD-dependent DNA ligase family. LigA subfamily. The cofactor is Mg(2+). It depends on Mn(2+) as a cofactor.

The enzyme catalyses NAD(+) + (deoxyribonucleotide)n-3'-hydroxyl + 5'-phospho-(deoxyribonucleotide)m = (deoxyribonucleotide)n+m + AMP + beta-nicotinamide D-nucleotide.. DNA ligase that catalyzes the formation of phosphodiester linkages between 5'-phosphoryl and 3'-hydroxyl groups in double-stranded DNA using NAD as a coenzyme and as the energy source for the reaction. It is essential for DNA replication and repair of damaged DNA. The chain is DNA ligase from Herpetosiphon aurantiacus (strain ATCC 23779 / DSM 785 / 114-95).